The sequence spans 213 residues: Orotate phosphoribosyltransferase (213 aa).

Residue Lys-26 coordinates 5-phospho-alpha-D-ribose 1-diphosphate. Orotate is bound at residue 34–35 (FF). 5-phospho-alpha-D-ribose 1-diphosphate contacts are provided by residues 72–73 (YK), Arg-98, Lys-99, Lys-102, and 123–131 (DDVISAGTS). The orotate site is built by Ser-127 and Arg-155.

Belongs to the purine/pyrimidine phosphoribosyltransferase family. PyrE subfamily. Homodimer. Requires Mg(2+) as cofactor.

The enzyme catalyses orotidine 5'-phosphate + diphosphate = orotate + 5-phospho-alpha-D-ribose 1-diphosphate. It participates in pyrimidine metabolism; UMP biosynthesis via de novo pathway; UMP from orotate: step 1/2. Functionally, catalyzes the transfer of a ribosyl phosphate group from 5-phosphoribose 1-diphosphate to orotate, leading to the formation of orotidine monophosphate (OMP). The chain is Orotate phosphoribosyltransferase from Neisseria gonorrhoeae (strain NCCP11945).